The chain runs to 79 residues: DNA-directed RNA polymerase subunit omega (79 aa).

It belongs to the RNA polymerase subunit omega family. In terms of assembly, in cyanobacteria the RNAP catalytic core is composed of 2 alpha, 1 beta, 1 beta', 1 gamma and 1 omega subunit. When a sigma factor is associated with the core the holoenzyme is formed, which can initiate transcription.

It carries out the reaction RNA(n) + a ribonucleoside 5'-triphosphate = RNA(n+1) + diphosphate. Functionally, promotes RNA polymerase assembly. Latches the N- and C-terminal regions of the beta' subunit thereby facilitating its interaction with the beta and alpha subunits. In Synechococcus sp. (strain JA-2-3B'a(2-13)) (Cyanobacteria bacterium Yellowstone B-Prime), this protein is DNA-directed RNA polymerase subunit omega.